A 548-amino-acid polypeptide reads, in one-letter code: Lysine--tRNA ligase (548 aa).

The short motif at 52-60 (PSGLPHIGT) is the 'HIGH' region element. A 'KMSKS' region motif is present at residues 300–304 (KISKS). Lys-303 serves as a coordination point for ATP.

The protein belongs to the class-I aminoacyl-tRNA synthetase family.

Its subcellular location is the cytoplasm. The enzyme catalyses tRNA(Lys) + L-lysine + ATP = L-lysyl-tRNA(Lys) + AMP + diphosphate. The protein is Lysine--tRNA ligase of Mesorhizobium japonicum (strain LMG 29417 / CECT 9101 / MAFF 303099) (Mesorhizobium loti (strain MAFF 303099)).